The primary structure comprises 150 residues: Classical arabinogalactan protein 6 (150 aa).

The first 20 residues, 1–20, serve as a signal peptide directing secretion; the sequence is MARQFVVLVLLTLTIATAFA. 2 stretches are compositionally biased toward low complexity: residues 19 to 75 and 85 to 98; these read FAAD…SPAA and SASSPSDSAEAPTV. Residues 19–131 form a disordered region; sequence FAADAPSASP…ESPKSGAVTT (113 aa). Ser126 carries GPI-anchor amidated serine lipidation. Positions 127–150 are cleaved as a propeptide — removed in mature form; it reads GAVTTAKFSVVGTVATVGFFFFSF.

Belongs to the classical AGP family. O-glycosylated on the hydroxyproline residues. As to expression, expressed in the anthers.

The protein resides in the cell membrane. In terms of biological role, proteoglycan that seems to be implicated in diverse developmental roles such as differentiation, cell-cell recognition, embryogenesis and programmed cell death. Plays an important role during the formation of the nexine layer of the pollen wall. This chain is Classical arabinogalactan protein 6 (AGP6), found in Arabidopsis thaliana (Mouse-ear cress).